The primary structure comprises 484 residues: ATP synthase subunit beta (484 aa).

Residue 152 to 159 (GGAGVGKT) coordinates ATP.

It belongs to the ATPase alpha/beta chains family. As to quaternary structure, F-type ATPases have 2 components, CF(1) - the catalytic core - and CF(0) - the membrane proton channel. CF(1) has five subunits: alpha(3), beta(3), gamma(1), delta(1), epsilon(1). CF(0) has three main subunits: a(1), b(2) and c(9-12). The alpha and beta chains form an alternating ring which encloses part of the gamma chain. CF(1) is attached to CF(0) by a central stalk formed by the gamma and epsilon chains, while a peripheral stalk is formed by the delta and b chains.

The protein localises to the cell inner membrane. The enzyme catalyses ATP + H2O + 4 H(+)(in) = ADP + phosphate + 5 H(+)(out). In terms of biological role, produces ATP from ADP in the presence of a proton gradient across the membrane. The catalytic sites are hosted primarily by the beta subunits. The polypeptide is ATP synthase subunit beta (Campylobacter lari (strain RM2100 / D67 / ATCC BAA-1060)).